The primary structure comprises 506 residues: Parthenolide synthase (506 aa).

The chain crosses the membrane as a helical span at residues 10–30 (LFLPTLCTILISYIIIKYVLI). Residues Asn32, Asn63, Asn121, Asn168, and Asn175 are each glycosylated (N-linked (GlcNAc...) asparagine). A helical transmembrane segment spans residues 301-321 (LLLNVLLGAIDTTFTTIVWAM). A heme-binding site is contributed by Cys448.

The protein belongs to the cytochrome P450 family.

The protein localises to the membrane. The catalysed reaction is (+)-costunolide + reduced [NADPH--hemoprotein reductase] + O2 = parthenolide + oxidized [NADPH--hemoprotein reductase] + H2O + H(+). The protein operates within secondary metabolite biosynthesis; terpenoid biosynthesis. In terms of biological role, involved in the biosynthesis of germacrene-derived sesquiterpene lactones. Component of the parthenolide biosynthetic pathway; parthenolide and conjugates are promising anti-cancer drugs highly active against colon cancer cells. Catalyzes the conversion of costunolide to parthenolide. The polypeptide is Parthenolide synthase (Tanacetum parthenium (Feverfew)).